We begin with the raw amino-acid sequence, 274 residues long: Nitrogenase iron protein (274 aa).

Position 8-15 (8-15 (GKGGIGKS)) interacts with ATP. Cys94 provides a ligand contact to [4Fe-4S] cluster. At Arg97 the chain carries ADP-ribosylarginine; by dinitrogenase reductase ADP-ribosyltransferase. Cys129 serves as a coordination point for [4Fe-4S] cluster.

This sequence belongs to the NifH/BchL/ChlL family. As to quaternary structure, homodimer. The cofactor is [4Fe-4S] cluster. Post-translationally, the reversible ADP-ribosylation of Arg-97 inactivates the nitrogenase reductase and regulates nitrogenase activity.

It catalyses the reaction N2 + 8 reduced [2Fe-2S]-[ferredoxin] + 16 ATP + 16 H2O = H2 + 8 oxidized [2Fe-2S]-[ferredoxin] + 2 NH4(+) + 16 ADP + 16 phosphate + 6 H(+). Its function is as follows. The key enzymatic reactions in nitrogen fixation are catalyzed by the nitrogenase complex, which has 2 components: the iron protein and the molybdenum-iron protein. In Methanocella arvoryzae (strain DSM 22066 / NBRC 105507 / MRE50), this protein is Nitrogenase iron protein.